We begin with the raw amino-acid sequence, 275 residues long: NAC domain-containing protein 2 (275 aa).

One can recognise an NAC domain in the interval 10-162 (LPPGFRFHPT…DWVLCRIYKK (153 aa)). A DNA-binding region spans residues 107-168 (VGIKKALVFY…IYKKKNLERA (62 aa)).

In terms of tissue distribution, expressed in roots, stem, flowers, and leaves.

The protein localises to the nucleus. Functionally, transcription factor that binds DNA motifs 5'-CGT[AG](5N)NACG[ACT][AC][AT][ACG][ACT]-3' and 5'-CACG[ACT][AC][AT][AGT][CT]-3' in target genes promoters. Promotes leaf senescence (developmental, light-induced and ABA-induced senescence) and regulates fruit yield and sugar content, probably by establishing abscisic acid (ABA) homeostasis. Activates the expression of senescence and ABA associated genes including NCED1, ABCG40, CYP707A2, SAG113, SGR1 and PAO, by directly binding to their promoters. In Solanum lycopersicum (Tomato), this protein is NAC domain-containing protein 2.